The primary structure comprises 366 residues: Phosphate acyltransferase (366 aa).

A disordered region spans residues 334-366; the sequence is ESAKNKETQSKQASTKNTAPKTSETTKESQQSL. Positions 343–366 are enriched in polar residues; sequence SKQASTKNTAPKTSETTKESQQSL.

This sequence belongs to the PlsX family. As to quaternary structure, homodimer. Probably interacts with PlsY.

The protein localises to the cytoplasm. The enzyme catalyses a fatty acyl-[ACP] + phosphate = an acyl phosphate + holo-[ACP]. Its pathway is lipid metabolism; phospholipid metabolism. Catalyzes the reversible formation of acyl-phosphate (acyl-PO(4)) from acyl-[acyl-carrier-protein] (acyl-ACP). This enzyme utilizes acyl-ACP as fatty acyl donor, but not acyl-CoA. The polypeptide is Phosphate acyltransferase (Onion yellows phytoplasma (strain OY-M)).